The chain runs to 691 residues: Seven transmembrane domain-containing tyrosine-protein kinase 1 (691 aa).

The Extracellular portion of the chain corresponds to 1-33 (MDTSCVSINQCGFCTYLFNRSIPLAGEGDGAIM). A helical transmembrane segment spans residues 34–54 (FNTMVDSMALGYIFSALYLLF). The Cytoplasmic segment spans residues 55–126 (RLQRSYTYLQ…PRIINSTYFK (72 aa)). A helical membrane pass occupies residues 127-144 (YTLFVSLWLAFEGLLLLF). Topologically, residues 145–153 (LPPNSLAYP) are extracellular. The helical transmembrane segment at 154 to 176 (AFVIIVGTGHIVTDNWVLVFLYG) threads the bilayer. The Cytoplasmic segment spans residues 177–186 (KEDDRFSARR). Residues 187–207 (SFYSCTLLYLIICCTTLASFF) form a helical membrane-spanning segment. The Extracellular portion of the chain corresponds to 208-227 (DDQTMCKKNDCQTFMFQDEY). Residues 228 to 248 (TSLAITVASLVVYTIVLGMTI) form a helical membrane-spanning segment. The Cytoplasmic segment spans residues 249–258 (KRSFLRPTGR). The helical transmembrane segment at 259 to 279 (IWLLFLMGYNCISSVGALLNI) threads the bilayer. Residues 280-284 (LDVDA) are Extracellular-facing. A helical membrane pass occupies residues 285–305 (GYCFLGIAAIIYSFSYGPLLF). The Cytoplasmic portion of the chain corresponds to 306–691 (RTCGNDTNLL…GAEEFHYIDG (386 aa)). Residues 363–634 (FKFGQVIGEG…ANVPISNTYV (272 aa)) enclose the Protein kinase domain. ATP is bound by residues 369–377 (IGEGYFGEV) and Lys-390. Asp-493 acts as the Proton acceptor in catalysis.

This sequence belongs to the protein kinase superfamily. TKL Tyr protein kinase family.

Its subcellular location is the membrane. The catalysed reaction is L-tyrosyl-[protein] + ATP = O-phospho-L-tyrosyl-[protein] + ADP + H(+). This is Seven transmembrane domain-containing tyrosine-protein kinase 1 (7tmk1) from Dictyostelium discoideum (Social amoeba).